The following is a 477-amino-acid chain: ATP synthase subunit beta (477 aa).

Glycine 148 to threonine 155 lines the ATP pocket.

The protein belongs to the ATPase alpha/beta chains family. In terms of assembly, F-type ATPases have 2 components, CF(1) - the catalytic core - and CF(0) - the membrane proton channel. CF(1) has five subunits: alpha(3), beta(3), gamma(1), delta(1), epsilon(1). CF(0) has three main subunits: a(1), b(2) and c(9-12). The alpha and beta chains form an alternating ring which encloses part of the gamma chain. CF(1) is attached to CF(0) by a central stalk formed by the gamma and epsilon chains, while a peripheral stalk is formed by the delta and b chains.

It is found in the cell inner membrane. The catalysed reaction is ATP + H2O + 4 H(+)(in) = ADP + phosphate + 5 H(+)(out). Functionally, produces ATP from ADP in the presence of a proton gradient across the membrane. The catalytic sites are hosted primarily by the beta subunits. The sequence is that of ATP synthase subunit beta from Psychrobacter cryohalolentis (strain ATCC BAA-1226 / DSM 17306 / VKM B-2378 / K5).